The chain runs to 129 residues: Glycine cleavage system H protein 2 (129 aa).

Residues 24–105 enclose the Lipoyl-binding domain; that stretch reads SVTVGISDHA…PYVSWFFKLK (82 aa). Residue Lys-65 is modified to N6-lipoyllysine.

This sequence belongs to the GcvH family. The glycine cleavage system is composed of four proteins: P, T, L and H. (R)-lipoate serves as cofactor.

Its function is as follows. The glycine cleavage system catalyzes the degradation of glycine. The H protein shuttles the methylamine group of glycine from the P protein to the T protein. In Pseudomonas aeruginosa (strain ATCC 15692 / DSM 22644 / CIP 104116 / JCM 14847 / LMG 12228 / 1C / PRS 101 / PAO1), this protein is Glycine cleavage system H protein 2.